The sequence spans 386 residues: Succinate--CoA ligase [ADP-forming] subunit beta (386 aa).

One can recognise an ATP-grasp domain in the interval 9–244; that stretch reads KALFREHGIP…ETQEDAREAR (236 aa). ATP-binding positions include lysine 46, 53–55, glutamate 99, threonine 102, and glutamate 107; that span reads GRG. 2 residues coordinate Mg(2+): asparagine 199 and aspartate 213. Substrate is bound by residues asparagine 264 and 321–323; that span reads GIV.

This sequence belongs to the succinate/malate CoA ligase beta subunit family. As to quaternary structure, heterotetramer of two alpha and two beta subunits. Mg(2+) is required as a cofactor.

The catalysed reaction is succinate + ATP + CoA = succinyl-CoA + ADP + phosphate. It carries out the reaction GTP + succinate + CoA = succinyl-CoA + GDP + phosphate. Its pathway is carbohydrate metabolism; tricarboxylic acid cycle; succinate from succinyl-CoA (ligase route): step 1/1. In terms of biological role, succinyl-CoA synthetase functions in the citric acid cycle (TCA), coupling the hydrolysis of succinyl-CoA to the synthesis of either ATP or GTP and thus represents the only step of substrate-level phosphorylation in the TCA. The beta subunit provides nucleotide specificity of the enzyme and binds the substrate succinate, while the binding sites for coenzyme A and phosphate are found in the alpha subunit. The chain is Succinate--CoA ligase [ADP-forming] subunit beta from Thioalkalivibrio sulfidiphilus (strain HL-EbGR7).